The following is a 161-amino-acid chain: Phosphopantetheine adenylyltransferase (161 aa).

Position 9 (Ser-9) interacts with substrate. Residues 9-10 and His-17 contribute to the ATP site; that span reads SF. Lys-41, Thr-73, and Arg-87 together coordinate substrate. ATP contacts are provided by residues 88–90, Glu-98, and 123–129; these read GLR and YSFISST.

This sequence belongs to the bacterial CoaD family. Homohexamer. The cofactor is Mg(2+).

Its subcellular location is the cytoplasm. The catalysed reaction is (R)-4'-phosphopantetheine + ATP + H(+) = 3'-dephospho-CoA + diphosphate. The protein operates within cofactor biosynthesis; coenzyme A biosynthesis; CoA from (R)-pantothenate: step 4/5. Functionally, reversibly transfers an adenylyl group from ATP to 4'-phosphopantetheine, yielding dephospho-CoA (dPCoA) and pyrophosphate. The protein is Phosphopantetheine adenylyltransferase of Desulforamulus reducens (strain ATCC BAA-1160 / DSM 100696 / MI-1) (Desulfotomaculum reducens).